We begin with the raw amino-acid sequence, 438 residues long: 3-phosphoshikimate 1-carboxyvinyltransferase (438 aa).

Residues Lys-28, Ser-29, and Arg-33 each coordinate 3-phosphoshikimate. Lys-28 is a binding site for phosphoenolpyruvate. Residues Gly-97 and Arg-125 each contribute to the phosphoenolpyruvate site. Residues Ser-168, Ser-169, Gln-170, Glu-316, and His-343 each coordinate 3-phosphoshikimate. A phosphoenolpyruvate-binding site is contributed by Gln-170. The active-site Proton acceptor is Glu-316. Phosphoenolpyruvate contacts are provided by Arg-347, Arg-388, and Lys-413.

It belongs to the EPSP synthase family. As to quaternary structure, monomer.

The protein localises to the cytoplasm. The enzyme catalyses 3-phosphoshikimate + phosphoenolpyruvate = 5-O-(1-carboxyvinyl)-3-phosphoshikimate + phosphate. Its pathway is metabolic intermediate biosynthesis; chorismate biosynthesis; chorismate from D-erythrose 4-phosphate and phosphoenolpyruvate: step 6/7. Its function is as follows. Catalyzes the transfer of the enolpyruvyl moiety of phosphoenolpyruvate (PEP) to the 5-hydroxyl of shikimate-3-phosphate (S3P) to produce enolpyruvyl shikimate-3-phosphate and inorganic phosphate. The protein is 3-phosphoshikimate 1-carboxyvinyltransferase of Rhodococcus jostii (strain RHA1).